We begin with the raw amino-acid sequence, 37 residues long: MKVRASVKKICSDCKVYKRNGVVRVSCKVKKHKQRQG.

Belongs to the bacterial ribosomal protein bL36 family.

The sequence is that of Large ribosomal subunit protein bL36 from Desulfotalea psychrophila (strain LSv54 / DSM 12343).